A 249-amino-acid polypeptide reads, in one-letter code: 5'-nucleotidase SurE (249 aa).

A divalent metal cation is bound by residues D8, D9, S39, and N91.

Belongs to the SurE nucleotidase family. It depends on a divalent metal cation as a cofactor.

The protein resides in the cytoplasm. It catalyses the reaction a ribonucleoside 5'-phosphate + H2O = a ribonucleoside + phosphate. Nucleotidase that shows phosphatase activity on nucleoside 5'-monophosphates. The chain is 5'-nucleotidase SurE from Haemophilus influenzae (strain PittGG).